The primary structure comprises 318 residues: NADH-ubiquinone oxidoreductase chain 1 (318 aa).

9 helical membrane-spanning segments follow: residues 2–22 (FLMN…FLTL), 37–57 (PNIV…KLFI), 69–89 (LMFT…WIPM), 100–120 (LGVL…LWSG), 136–156 (VAQT…IMMM), 171–191 (HMWL…STLA), 231–251 (IIMM…NPLF), 253–273 (ELFT…FLWV), and 293–313 (FLPL…LSAG).

Belongs to the complex I subunit 1 family. In terms of assembly, core subunit of respiratory chain NADH dehydrogenase (Complex I) which is composed of 45 different subunits.

The protein localises to the mitochondrion inner membrane. The catalysed reaction is a ubiquinone + NADH + 5 H(+)(in) = a ubiquinol + NAD(+) + 4 H(+)(out). Core subunit of the mitochondrial membrane respiratory chain NADH dehydrogenase (Complex I) which catalyzes electron transfer from NADH through the respiratory chain, using ubiquinone as an electron acceptor. Essential for the catalytic activity and assembly of complex I. The polypeptide is NADH-ubiquinone oxidoreductase chain 1 (MT-ND1) (Euphractus sexcinctus (Six-banded armadillo)).